The following is an 80-amino-acid chain: Exodeoxyribonuclease 7 small subunit (80 aa).

This sequence belongs to the XseB family. Heterooligomer composed of large and small subunits.

It is found in the cytoplasm. The catalysed reaction is Exonucleolytic cleavage in either 5'- to 3'- or 3'- to 5'-direction to yield nucleoside 5'-phosphates.. Bidirectionally degrades single-stranded DNA into large acid-insoluble oligonucleotides, which are then degraded further into small acid-soluble oligonucleotides. This is Exodeoxyribonuclease 7 small subunit from Streptomyces avermitilis (strain ATCC 31267 / DSM 46492 / JCM 5070 / NBRC 14893 / NCIMB 12804 / NRRL 8165 / MA-4680).